The primary structure comprises 51 residues: Ribosome biogenesis protein Nop10 (51 aa).

This sequence belongs to the NOP10 family.

In terms of biological role, involved in ribosome biogenesis; more specifically in 18S rRNA pseudouridylation and in cleavage of pre-rRNA. This Methanococcus maripaludis (strain C6 / ATCC BAA-1332) protein is Ribosome biogenesis protein Nop10.